Here is a 175-residue protein sequence, read N- to C-terminus: Small ribosomal subunit protein uS5 (175 aa).

Residues 19 to 82 form the S5 DRBM domain; sequence WVDRLVSVNR…DDAKKNVIRV (64 aa).

Belongs to the universal ribosomal protein uS5 family. As to quaternary structure, part of the 30S ribosomal subunit. Contacts proteins S4 and S8.

In terms of biological role, with S4 and S12 plays an important role in translational accuracy. Functionally, located at the back of the 30S subunit body where it stabilizes the conformation of the head with respect to the body. The sequence is that of Small ribosomal subunit protein uS5 from Salinibacter ruber (strain DSM 13855 / M31).